A 158-amino-acid polypeptide reads, in one-letter code: L-alanine exporter AlaE (158 aa).

A run of 4 helical transmembrane segments spans residues 23–43 (FAMV…VSGM), 53–73 (LVAI…RDAV), 92–112 (VIAY…FVGA), and 117–137 (IITA…AYGY).

It belongs to the AlaE exporter family.

Its subcellular location is the cell inner membrane. Exports L-alanine. This chain is L-alanine exporter AlaE, found in Cronobacter sakazakii (strain ATCC BAA-894) (Enterobacter sakazakii).